The sequence spans 404 residues: Exodeoxyribonuclease 7 large subunit (404 aa).

This sequence belongs to the XseA family. In terms of assembly, heterooligomer composed of large and small subunits.

Its subcellular location is the cytoplasm. It carries out the reaction Exonucleolytic cleavage in either 5'- to 3'- or 3'- to 5'-direction to yield nucleoside 5'-phosphates.. Bidirectionally degrades single-stranded DNA into large acid-insoluble oligonucleotides, which are then degraded further into small acid-soluble oligonucleotides. In Caldanaerobacter subterraneus subsp. tengcongensis (strain DSM 15242 / JCM 11007 / NBRC 100824 / MB4) (Thermoanaerobacter tengcongensis), this protein is Exodeoxyribonuclease 7 large subunit.